A 314-amino-acid chain; its full sequence is Torsin-2A (314 aa).

The N-terminal stretch at 1–19 is a signal peptide; it reads MAVRWWIIPMLLLVPGSSG. 86 to 93 contacts ATP; the sequence is GWSGTGKT. 2 N-linked (GlcNAc...) asparagine glycosylation sites follow: asparagine 142 and asparagine 283.

The protein belongs to the ClpA/ClpB family. Torsin subfamily. Homohexamer.

It localises to the endoplasmic reticulum lumen. The protein is Torsin-2A (tor2a) of Xenopus laevis (African clawed frog).